The chain runs to 518 residues: MPTVVVMDVSLSMTRPVPVEGTEEFQRKHLAVHGLTMLFEHMATNYKLEFTAMVVFSSLWELMVPFTRDYNTLQEALSNIDDYDKTCLESALQGVSSVVQQEWGASIPSQIVLVTDGCLGIGKGSLQHSLATLNQRNDSNRFPLPFSFPSKLYIMCMANLEELQGSDSLEYLERLIDLNNGEGQIFTIDGPLCLKNVQSMFGKLIDVAYTPFHAVLKCGNLSSDVQVFPRPEPVITDEEIDPLPKTINTDLEVVGFIDIADISSPPVLSRHLVLPIALNKEGDEVGTGLADDMEDENSANQIAGKIPNFCVLLHGSLKVEGMVALVQLGPDWHGMLYSQADSKKKSNLMMSLFEPGLEPLPWLGKTMQLGPITDAKENPYGEEDNKSPFPLQPKNKRSYAQNVTVWIKPSGLQTDVQKILRNARKLPEKTQTFYKELNRLRKAALAFGFLDLLKGVSDMLERECTLLPDTAHPDAAFQLSHAAAQLKLASTGGSEHGAYDHNIVPLQTDFSGRNSDRI.

One can recognise a VWFA domain in the interval 2–204 (PTVVVMDVSL…KNVQSMFGKL (203 aa)). 3 residues coordinate Mg(2+): serine 10, serine 12, and threonine 86.

It belongs to the Integrator subunit 14 family. In terms of assembly, component of the Integrator complex, composed of core subunits INTS1, INTS2, INTS3, INTS4, INTS5, INTS6, INTS7, INTS8, INTS9/RC74, INTS10, INTS11/CPSF3L, INTS12, INTS13, INTS14 and INTS15. The core complex associates with protein phosphatase 2A subunits PPP2CA and PPP2R1A, to form the Integrator-PP2A (INTAC) complex. INTS14 is part of the tail subcomplex, composed of INTS10, INTS13, INTS14 and INTS15.

Its subcellular location is the nucleus. Component of the integrator complex, a multiprotein complex that terminates RNA polymerase II (Pol II) transcription in the promoter-proximal region of genes. The integrator complex provides a quality checkpoint during transcription elongation by driving premature transcription termination of transcripts that are unfavorably configured for transcriptional elongation: the complex terminates transcription by (1) catalyzing dephosphorylation of the C-terminal domain (CTD) of Pol II subunit POLR2A/RPB1 and SUPT5H/SPT5, (2) degrading the exiting nascent RNA transcript via endonuclease activity and (3) promoting the release of Pol II from bound DNA. The integrator complex is also involved in terminating the synthesis of non-coding Pol II transcripts, such as enhancer RNAs (eRNAs), small nuclear RNAs (snRNAs), telomerase RNAs and long non-coding RNAs (lncRNAs). Within the integrator complex, INTS14 is part of the integrator tail module that acts as a platform for the recruitment of transcription factors at promoters. In Xenopus tropicalis (Western clawed frog), this protein is Integrator complex subunit 14.